The primary structure comprises 529 residues: FAD-binding monooxygenase BOA2 (529 aa).

FAD contacts are provided by residues 58-61, 70-71, and tyrosine 76; these read VWWK and DI. 68 to 70 is a binding site for NADP(+); it reads ACD. Residues 198-204 and 221-222 contribute to the NADP(+) site; these read TGPSACQ and RS.

The protein belongs to the FAD-binding monooxygenase family. It depends on FAD as a cofactor.

It functions in the pathway polyketide biosynthesis. Its function is as follows. FAD-binding monooxygenase; part of the gene cluster A that mediates the biosynthesis of botcinic acid and its botcinin derivatives, acetate-derived polyketides that contribute to virulence when combined with the sesquiterpene botrydial. Botcinic acid and its derivatives have been shown to induce chlorosis and necrosis during host plant infection, but also have antifungal activities. Two polyketide synthases, BOA6 and BOA9, are involved in the biosynthesis of botcinins. BOA6 mediates the formation of the per-methylated tetraketide core by condensation of four units of malonyl-CoA with one unit of acetyl-CoA, which would be methylated in activated methylene groups to yield a bicyclic acid intermediate that could then either be converted to botrylactone derivatives or lose the starter acetate unit through a retro-Claisen type C-C bond cleavage to yield botcinin derivatives. The second polyketide synthase, BOA9, is probably required for the biosynthesis of the tetraketide side chain of botcinins. The methyltransferase (MT) domain within BOA6 is probably responsible for the incorporation of four methyl groups. The trans-enoyl reductase BOA5 might take over the enoyl reductase function of BOA6 that misses an ER domain. The monooxygenases BOA2, BOA3 and BOA4 might be involved in further hydroxylations at C4, C5 and C8, whereas BOA7, close to BOA9, could potentially be involved in the hydroxylation at C4 in the side chain of botcinins. The protein is FAD-binding monooxygenase BOA2 of Botryotinia fuckeliana (strain B05.10) (Noble rot fungus).